The following is a 248-amino-acid chain: Probable transcriptional regulatory protein Psyr_1407 (248 aa).

It belongs to the TACO1 family.

Its subcellular location is the cytoplasm. In Pseudomonas syringae pv. syringae (strain B728a), this protein is Probable transcriptional regulatory protein Psyr_1407.